The primary structure comprises 217 residues: MTQDEMKKAAGWAALKYVVPGTIVGVGTGSTVNHFIDALATMKDEIKGAVSSSVASTERLKGFGITVYDLNEIDALSVYVDGADEINGTRDMIKGGGAALTREKIVAAVADKFICIIDNTKTVDVLGTFPLPVEVIPMAREYVAREIRKLGGNPVWREGVVTDNGNHILDVKGMAITDAKGLEVQLNAIVGTVTNGLFAHRGADVVLIGTPDGVITQ.

Residues 28 to 31 (TGST), 81 to 84 (DGAD), and 94 to 97 (KGGG) contribute to the substrate site. The Proton acceptor role is filled by E103. K121 serves as a coordination point for substrate.

It belongs to the ribose 5-phosphate isomerase family. In terms of assembly, homodimer.

The catalysed reaction is aldehydo-D-ribose 5-phosphate = D-ribulose 5-phosphate. The protein operates within carbohydrate degradation; pentose phosphate pathway; D-ribose 5-phosphate from D-ribulose 5-phosphate (non-oxidative stage): step 1/1. Catalyzes the reversible conversion of ribose-5-phosphate to ribulose 5-phosphate. This is Ribose-5-phosphate isomerase A from Aeromonas hydrophila subsp. hydrophila (strain ATCC 7966 / DSM 30187 / BCRC 13018 / CCUG 14551 / JCM 1027 / KCTC 2358 / NCIMB 9240 / NCTC 8049).